A 154-amino-acid chain; its full sequence is Protein LOL1 (154 aa).

3 putative zinc finger regions span residues 34-64, 73-103, and 111-141; these read QLVCSGCRNLLMYPVGATSVCCAVCNAVTAV, QLVCGGCHTLLMYIRGATSVQCSCCHTVNLA, and HVNCGNCMMLLMYQYGARSVKCAVCNFVTSV.

It localises to the nucleus. Positive regulator of reactive oxygen-induced cell death. May be involved in the repression of the copper/zinc superoxide dismutase CSD1 and CSD2 that detoxify accumulating superoxide before the reactive oxygen species (ROS) can trigger a cell death cascade. LSD1 and LOL1 have antagonistic effects on CSD1 and CSD2 accumulation to regulate oxidative stress-induced cell death. This chain is Protein LOL1 (LOL1), found in Arabidopsis thaliana (Mouse-ear cress).